A 78-amino-acid chain; its full sequence is Beta-defensin 12 (78 aa).

A signal peptide spans 1-27; sequence MALSRGTFYFGLALFFIVVELPSGSWA. 3 disulfide bridges follow: Cys46/Cys73, Cys53/Cys67, and Cys57/Cys74.

This sequence belongs to the beta-defensin family.

The protein localises to the secreted. Has antibacterial activity. This Rattus norvegicus (Rat) protein is Beta-defensin 12 (Defb12).